A 223-amino-acid polypeptide reads, in one-letter code: Large ribosomal subunit protein bL21 (223 aa).

This sequence belongs to the bacterial ribosomal protein bL21 family. Part of the 50S ribosomal subunit. Contacts protein L20.

In terms of biological role, this protein binds to 23S rRNA in the presence of protein L20. This chain is Large ribosomal subunit protein bL21, found in Mesorhizobium japonicum (strain LMG 29417 / CECT 9101 / MAFF 303099) (Mesorhizobium loti (strain MAFF 303099)).